Consider the following 128-residue polypeptide: Con-Ins F2c (128 aa).

Residues 1 to 24 (MTTSSYFLLVALGLLLYVCRSSFG) form the signal peptide. Disulfide bonds link Cys29–Cys104, Cys41–Cys107, Cys53–Cys120, and Cys106–Cys111. Positions 59-89 (LQGGTGKKRGRASLLRKRRAFLSMLKARAKR) are cleaved as a propeptide — c peptide. Glu115 is subject to 4-carboxyglutamate; partial. Ser127 carries the serine amide modification.

It belongs to the insulin family. In terms of assembly, heterodimer of A and B chains; disulfide-linked. Expressed by the venom gland.

It localises to the secreted. Its function is as follows. This venom insulin facilitates prey capture by rapidly inducing hypoglycemic shock. Intraperitoneal injection of this peptide into zebrafish lowers blood glucose with the same potency than human insulin. In vivo, when applied to water, this peptide reduces overall locomotor activity of zebrafish larvae, observed as a significant decrease in the percentage of time spent swimming and movement frequency. This chain is Con-Ins F2c, found in Conus floridulus (Cone snail).